A 356-amino-acid chain; its full sequence is Protein-glutamate methylesterase/protein-glutamine glutaminase 2 (356 aa).

The Response regulatory domain occupies 6 to 123; sequence KVLIVDDSAL…KQFLEESSIR (118 aa). Residue aspartate 57 is modified to 4-aspartylphosphate. Residues 165-356 enclose the CheB-type methylesterase domain; sequence VQRTEKVVVV…AAAIVKACNS (192 aa). Active-site residues include serine 177, histidine 203, and aspartate 299.

Belongs to the CheB family. In terms of processing, phosphorylated by CheA. Phosphorylation of the N-terminal regulatory domain activates the methylesterase activity.

It localises to the cytoplasm. The catalysed reaction is [protein]-L-glutamate 5-O-methyl ester + H2O = L-glutamyl-[protein] + methanol + H(+). It carries out the reaction L-glutaminyl-[protein] + H2O = L-glutamyl-[protein] + NH4(+). In terms of biological role, involved in chemotaxis. Part of a chemotaxis signal transduction system that modulates chemotaxis in response to various stimuli. Catalyzes the demethylation of specific methylglutamate residues introduced into the chemoreceptors (methyl-accepting chemotaxis proteins or MCP) by CheR. Also mediates the irreversible deamidation of specific glutamine residues to glutamic acid. The sequence is that of Protein-glutamate methylesterase/protein-glutamine glutaminase 2 from Oleidesulfovibrio alaskensis (strain ATCC BAA-1058 / DSM 17464 / G20) (Desulfovibrio alaskensis).